The sequence spans 235 residues: Aspartate/glutamate leucyltransferase (235 aa).

This sequence belongs to the R-transferase family. Bpt subfamily.

The protein resides in the cytoplasm. It carries out the reaction N-terminal L-glutamyl-[protein] + L-leucyl-tRNA(Leu) = N-terminal L-leucyl-L-glutamyl-[protein] + tRNA(Leu) + H(+). The catalysed reaction is N-terminal L-aspartyl-[protein] + L-leucyl-tRNA(Leu) = N-terminal L-leucyl-L-aspartyl-[protein] + tRNA(Leu) + H(+). Functionally, functions in the N-end rule pathway of protein degradation where it conjugates Leu from its aminoacyl-tRNA to the N-termini of proteins containing an N-terminal aspartate or glutamate. In Pseudomonas putida (strain W619), this protein is Aspartate/glutamate leucyltransferase.